Here is a 186-residue protein sequence, read N- to C-terminus: NADH-quinone oxidoreductase subunit B (186 aa).

4 residues coordinate [4Fe-4S] cluster: cysteine 44, cysteine 45, cysteine 110, and cysteine 139.

It belongs to the complex I 20 kDa subunit family. As to quaternary structure, NDH-1 is composed of 14 different subunits. Subunits NuoB, C, D, E, F, and G constitute the peripheral sector of the complex. It depends on [4Fe-4S] cluster as a cofactor.

It localises to the cell inner membrane. The catalysed reaction is a quinone + NADH + 5 H(+)(in) = a quinol + NAD(+) + 4 H(+)(out). Functionally, NDH-1 shuttles electrons from NADH, via FMN and iron-sulfur (Fe-S) centers, to quinones in the respiratory chain. The immediate electron acceptor for the enzyme in this species is believed to be ubiquinone. Couples the redox reaction to proton translocation (for every two electrons transferred, four hydrogen ions are translocated across the cytoplasmic membrane), and thus conserves the redox energy in a proton gradient. The polypeptide is NADH-quinone oxidoreductase subunit B (Leptospira biflexa serovar Patoc (strain Patoc 1 / Ames)).